The following is a 142-amino-acid chain: MSAPSLPPAWQLYLKDHRISTFKNWPFLEGCACTPERMAAAGFIHCPTENEPDLAQCFFCFKELEGWEPDDDPIEEHKKHSSGCAFLSVKKQFEELTLSEFLKLDKERAKNKIAKETNNKQKEFEETAKKVRCAIEQLAASE.

One copy of the BIR repeat lies at 18 to 88 (RISTFKNWPF…KHSSGCAFLS (71 aa)). A Phosphoserine; by AURKC modification is found at Ser20. The residue at position 23 (Lys23) is an N6-acetyllysine. Thr34 is modified (phosphothreonine; by CDK1 and CDK15). Phosphothreonine is present on Thr48. Zn(2+) contacts are provided by Cys57, Cys60, His77, and Cys84. Residues Lys90, Lys110, Lys112, and Lys115 each carry the N6-acetyllysine modification. At Thr117 the chain carries Phosphothreonine; by AURKB. Lys129 is modified (N6-acetyllysine).

It belongs to the IAP family. Monomer or homodimer. Exists as a homodimer in the apo state and as a monomer in the CPC-bound state. The monomer protects cells against apoptosis more efficiently than the dimer. Only the dimeric form is capable of enhancing tubulin stability in cells. When phosphorylated, interacts with LAMTOR5/HBXIP; the resulting complex binds pro-CASP9, as well as active CASP9, but much less efficiently. Component of the chromosomal passenger complex (CPC) composed of at least BIRC5/survivin, CDCA8/borealin, INCENP, AURKB or AURKC; in the complex forms a triple-helix bundle-based subcomplex with INCENP and CDCA8. Interacts with JTB. Interacts (via BIR domain) with histone H3 phosphorylated at 'Thr-3' (H3pT3). Interacts with EVI5. Interacts with GTP-bound RAN in both the S and M phases of the cell cycle. Interacts with USP9X. Interacts with tubulin. Interacts with BIRC2/c-IAP1. The acetylated form at Lys-129 interacts with STAT3. The monomeric form deacetylated at Lys-129 interacts with XPO1/CRM1. The monomeric form interacts with XIAP/BIRC4. Both the dimeric and monomeric form can interact with DIABLO/SMAC. Interacts with BIRC6/bruce. Interacts with FBXL7; this interaction facilitates the polyubiquitination and subsequent proteasomal degradation of BIRC5 by the SCF(FBXL7) E3 ubiquitin-protein ligase complex. Ubiquitinated by the Cul9-RING ubiquitin-protein ligase complex, leading to its degradation. Ubiquitination is required for centrosomal targeting. Deubiquitinated by USP35 or USP38; leading to stabilization. In terms of processing, acetylation at Lys-129 results in its homodimerization, while deacetylation promotes the formation of monomers which heterodimerize with XPO1/CRM1 which facilitates its nuclear export. The acetylated form represses STAT3 transactivation. The dynamic equilibrium between its acetylation and deacetylation at Lys-129 determines its interaction with XPO1/CRM1, its subsequent subcellular localization, and its ability to inhibit STAT3 transactivation. Post-translationally, in vitro phosphorylation at Thr-117 by AURKB prevents interaction with INCENP and localization to mitotic chromosomes. Phosphorylation at Thr-48 by CK2 is critical for its mitotic and anti-apoptotic activities. Phosphorylation at Thr-34 by CDK15 is critical for its anti-apoptotic activity. Phosphorylation at Ser-20 by AURKC is critical for regulation of proper chromosome alignment and segregation, and possibly cytokinesis.

The protein resides in the cytoplasm. It is found in the nucleus. The protein localises to the chromosome. Its subcellular location is the centromere. It localises to the cytoskeleton. The protein resides in the spindle. It is found in the kinetochore. The protein localises to the midbody. Functionally, multitasking protein that has dual roles in promoting cell proliferation and preventing apoptosis. Component of a chromosome passage protein complex (CPC) which is essential for chromosome alignment and segregation during mitosis and cytokinesis. Acts as an important regulator of the localization of this complex; directs CPC movement to different locations from the inner centromere during prometaphase to midbody during cytokinesis and participates in the organization of the center spindle by associating with polymerized microtubules. Involved in the recruitment of CPC to centromeres during early mitosis via association with histone H3 phosphorylated at 'Thr-3' (H3pT3) during mitosis. The complex with RAN plays a role in mitotic spindle formation by serving as a physical scaffold to help deliver the RAN effector molecule TPX2 to microtubules. May counteract a default induction of apoptosis in G2/M phase. The acetylated form represses STAT3 transactivation of target gene promoters. May play a role in neoplasia. Inhibitor of CASP3 and CASP7. Essential for the maintenance of mitochondrial integrity and function. The polypeptide is Baculoviral IAP repeat-containing protein 5 (BIRC5) (Sus scrofa (Pig)).